The sequence spans 265 residues: Speedy protein E8 (265 aa).

Residues 1-80 (MGQILGKIMM…EPEKELAPEP (80 aa)) are disordered. The segment covering 66–80 (DESDDEPEKELAPEP) has biased composition (acidic residues).

It belongs to the Speedy/Ringo family.

This is Speedy protein E8 from Homo sapiens (Human).